The following is a 474-amino-acid chain: ATP synthase subunit beta (474 aa).

151–158 (GGAGVGKT) lines the ATP pocket.

This sequence belongs to the ATPase alpha/beta chains family. F-type ATPases have 2 components, CF(1) - the catalytic core - and CF(0) - the membrane proton channel. CF(1) has five subunits: alpha(3), beta(3), gamma(1), delta(1), epsilon(1). CF(0) has four main subunits: a(1), b(1), b'(1) and c(9-12).

It is found in the cell inner membrane. It carries out the reaction ATP + H2O + 4 H(+)(in) = ADP + phosphate + 5 H(+)(out). Produces ATP from ADP in the presence of a proton gradient across the membrane. The catalytic sites are hosted primarily by the beta subunits. The chain is ATP synthase subunit beta from Jannaschia sp. (strain CCS1).